A 233-amino-acid chain; its full sequence is Large ribosomal subunit protein uL1 (233 aa).

The protein belongs to the universal ribosomal protein uL1 family. In terms of assembly, part of the 50S ribosomal subunit.

Binds directly to 23S rRNA. The L1 stalk is quite mobile in the ribosome, and is involved in E site tRNA release. Its function is as follows. Protein L1 is also a translational repressor protein, it controls the translation of the L11 operon by binding to its mRNA. The chain is Large ribosomal subunit protein uL1 from Geobacillus kaustophilus (strain HTA426).